The following is a 446-amino-acid chain: Regulator of drug sensitivity 2 (446 aa).

The segment at residues 15-45 is a DNA-binding region (zn(2)-C6 fungal-type); the sequence is KTCLFCKRSHVVCDKQRPCSRCVKRDIAHLC. Disordered stretches follow at residues 52 to 106 and 158 to 218; these read VPNE…PKLD and ASNV…KEES. Polar residues-rich tracts occupy residues 56-70 and 84-96; these read MPSQHESSPNDNNIQ and DYQNEPVNKSGST. Ser-102 carries the phosphoserine modification. Polar residues predominate over residues 160 to 177; it reads NVHLENGSQTTQSPLEYQ. The segment covering 178 to 192 has biased composition (basic and acidic residues); that stretch reads NDNRRDEIGVARQEN. A compositionally biased stretch (polar residues) spans 193–206; that stretch reads RSPTIMSGSSNSIS. Over residues 207-218 the composition is skewed to basic and acidic residues; that stretch reads KGDKQDQEKEES. Thr-231 is modified (phosphothreonine).

Post-translationally, phosphorylated by SNF1 in absence of glucose. The phosphorylation is required for induction of transcription of gluconeogenic genes.

The protein localises to the cytoplasm. Its subcellular location is the nucleus. Functionally, transcription factor which regulates the expression of genes for gluconeogenesis, the TCA cycle, and glucose metabolism. Involved in the cell wall remodeling process and drug resistance. This is Regulator of drug sensitivity 2 (RDS2) from Saccharomyces cerevisiae (strain ATCC 204508 / S288c) (Baker's yeast).